Reading from the N-terminus, the 387-residue chain is Alpha-sarcoglycan (387 aa).

Residues 1–23 (MAETLFWTPLLVVLLAGLGDTEA) form the signal peptide. The Extracellular portion of the chain corresponds to 24–290 (QQTTLHPLVG…APDRDFLVDA (267 aa)). 2 N-linked (GlcNAc...) asparagine glycosylation sites follow: N174 and N246. The chain crosses the membrane as a helical span at residues 291–311 (LVTLLVPLLVALLLTLLLAYV). The Cytoplasmic segment spans residues 312–387 (MCCRREGRLK…AQVPLILDQH (76 aa)). S377 carries the phosphoserine modification.

The protein belongs to the sarcoglycan alpha/epsilon family. In terms of assembly, interacts with the syntrophin SNTA1. Cross-link to form 2 major subcomplexes: one consisting of SGCB, SGCD and SGCG and the other consisting of SGCB and SGCD. The association between SGCB and SGCG is particularly strong while SGCA is loosely associated with the other sarcoglycans. Most strongly expressed in skeletal muscle. Also expressed in cardiac muscle and, at much lower levels, in lung. In the fetus, most abundant in cardiac muscle and, at lower levels, in lung. Also detected in liver and kidney. Not expressed in brain.

The protein localises to the cell membrane. Its subcellular location is the sarcolemma. It is found in the cytoplasm. The protein resides in the cytoskeleton. Functionally, component of the sarcoglycan complex, a subcomplex of the dystrophin-glycoprotein complex which forms a link between the F-actin cytoskeleton and the extracellular matrix. In Homo sapiens (Human), this protein is Alpha-sarcoglycan (SGCA).